The sequence spans 764 residues: Chloride anion exchanger (764 aa).

Residues 1 to 76 (MIEPFGNQYI…YRLKEWLLSD (76 aa)) lie on the Cytoplasmic side of the membrane. The chain crosses the membrane as a helical span at residues 77 to 97 (IVSGISTGIVAVLQGLAFALL). At 98 to 99 (VD) the chain is on the extracellular side. Residues 100 to 120 (IPPVYGLYASFFPAIIYLFFG) traverse the membrane as a helical segment. The Cytoplasmic segment spans residues 121–124 (TSRH). A helical transmembrane segment spans residues 125-145 (ISVGPFPILSMMVGLAVSGAV). Residues 146-175 (SKAVPDRNATTLGLPNNSNNSSLLDDERVR) lie on the Extracellular side of the membrane. 3 N-linked (GlcNAc...) asparagine glycosylation sites follow: asparagine 153, asparagine 161, and asparagine 165. Residues 176–196 (VAAAASVTVLSGIIQLAFGIL) traverse the membrane as a helical segment. Residue arginine 197 is a topological domain, cytoplasmic. A helical membrane pass occupies residues 198 to 218 (IGFVVIYLSESLISGFTTAAA). At 219-257 (VHVLVSQLKFIFQLTVPSHTDPVSIFKVLYSVFSQIEKT) the chain is on the extracellular side. Residues 258–278 (NIADLVTALIVLLVVSIVKEI) traverse the membrane as a helical segment. Over 279–342 (NQRFKDKLPV…VETFQNTVGD (64 aa)) the chain is Cytoplasmic. A helical membrane pass occupies residues 343-363 (CFGIAMVAFAVAFSVASVYSL). The Extracellular portion of the chain corresponds to 364–374 (KYDYPLDGNQE). The chain crosses the membrane as a helical span at residues 375–395 (LIALGLGNIVCGVFRGFAGST). At 396–411 (ALSRSAVQESTGGKTQ) the chain is on the cytoplasmic side. The chain crosses the membrane as a helical span at residues 412 to 432 (IAGLIGAIIVLIVVLAIGFLL). Over 433 to 469 (APLQKSVLAALALGNLKGMLMQFAEIGRLWRKDKYDC) the chain is Extracellular. Residues 470–490 (LIWIMTFIFTIVLGLGLGLAA) form a helical membrane-spanning segment. Residues 491–701 (SVAFQLLTIV…EKLNRYEFFD (211 aa)) are Cytoplasmic-facing. The STAS domain occupies 525 to 720 (DYYDMYEPEG…LTIHDAVLHI (196 aa)). Residues 761–764 (ETKF) carry the PDZ-binding motif.

Belongs to the SLC26A/SulP transporter (TC 2.A.53) family. Interacts with CFTR, SLC26A6 and NHERF1. Interacts with PDZK1. Interacts (via PDZ-binding motif) with NHERF4 (via the third PDZ domain); interaction leads to decreased expression of SLC26A3 on the cell membrane resulting in its reduced exchanger activity. Post-translationally, N-glycosylation is required for efficient cell surface expression, and protection from proteolytic degradation. In terms of tissue distribution, expressed in the colon. Expression is significantly decreased in adenomas (polyps) and adenocarcinomas of the colon.

The protein localises to the apical cell membrane. It is found in the membrane. It localises to the cell membrane. The catalysed reaction is hydrogencarbonate(in) + 2 chloride(out) = hydrogencarbonate(out) + 2 chloride(in). Its activity is regulated as follows. Inhibited by acidic pH. Its function is as follows. Mediates chloride-bicarbonate exchange with a chloride bicarbonate stoichiometry of 2:1 in the intestinal epithelia. Plays a role in the chloride and bicarbonate homeostasis during sperm epididymal maturation and capacitation. In Homo sapiens (Human), this protein is Chloride anion exchanger (SLC26A3).